We begin with the raw amino-acid sequence, 328 residues long: MGVKLRDVVSPRRIRLEDLRGRTVAVDAANTLYQFLSSIRQRDGTPLMDSRGRVTSHLSGILYRTAAVMEREIRVIYVFDGRSHHLKGETVSRRADIRKKSEVEWKRALEEGDIDRAKKYAVRSSRMSSEILESSKRLLELLGIPYVQAPGEGEAQASYMVKMGDAWAVASQDYDCLLFGAPRVVRNLTLSGKLEDPEIIELESTLRELSISHTQLVDMALLVGTDFNEGVKGIGARRGLKLIREKGDIFKVIRDLEADIGGDPQVLRRIFLEPEVSEDYEIRWRKPDVEGVIEFLCTEHGFSEDRVRAALKKFEGASSTQKSLEDWF.

Residues 1 to 98 (MGVKLRDVVS…ETVSRRADIR (98 aa)) are N-domain. Positions 27, 80, 152, 154, 173, 175, and 226 each coordinate Mg(2+). Residues 116-247 (RAKKYAVRSS…RGLKLIREKG (132 aa)) form an I-domain region. Residues 320 to 328 (TQKSLEDWF) form an interaction with PCNA region.

Belongs to the XPG/RAD2 endonuclease family. FEN1 subfamily. In terms of assembly, interacts with PCNA. PCNA stimulates the nuclease activity without altering cleavage specificity. The cofactor is Mg(2+).

Functionally, structure-specific nuclease with 5'-flap endonuclease and 5'-3' exonuclease activities involved in DNA replication and repair. During DNA replication, cleaves the 5'-overhanging flap structure that is generated by displacement synthesis when DNA polymerase encounters the 5'-end of a downstream Okazaki fragment. Binds the unpaired 3'-DNA end and kinks the DNA to facilitate 5' cleavage specificity. Cleaves one nucleotide into the double-stranded DNA from the junction in flap DNA, leaving a nick for ligation. Also involved in the base excision repair (BER) pathway. Acts as a genome stabilization factor that prevents flaps from equilibrating into structures that lead to duplications and deletions. Also possesses 5'-3' exonuclease activity on nicked or gapped double-stranded DNA. The chain is Flap endonuclease 1 from Methanothermobacter thermautotrophicus (strain ATCC 29096 / DSM 1053 / JCM 10044 / NBRC 100330 / Delta H) (Methanobacterium thermoautotrophicum).